The primary structure comprises 145 residues: Large ribosomal subunit protein uL15 (145 aa).

The interval 1–52 (MRLNTLSPAAGSKRVKHRPGRGIGSGLGKTGGRGVKGQTSRSGGGKVRNGFE) is disordered. Composition is skewed to gly residues over residues 21–35 (RGIGSGLGKTGGRGV) and 42–52 (SGGGKVRNGFE).

Belongs to the universal ribosomal protein uL15 family. Part of the 50S ribosomal subunit.

Binds to the 23S rRNA. This Aeromonas hydrophila subsp. hydrophila (strain ATCC 7966 / DSM 30187 / BCRC 13018 / CCUG 14551 / JCM 1027 / KCTC 2358 / NCIMB 9240 / NCTC 8049) protein is Large ribosomal subunit protein uL15.